The following is a 1487-amino-acid chain: MIRLGAPQSLVLLTLLIAAVLRCQGQDAQEAGSCLQNGQRYKDKDVWKPSSCRICVCDTGNVLCDDIICEDPDCLNPEIPFGECCPICPADLATASGKLGPKGQKGEPGDIRDIIGPRGPPGPQGPAGEQGPRGDRGDKGEKGAPGPRGRDGEPGTPGNPGPAGPPGPPGPPGLSAGNFAAQMAGGYDEKAGGAQMGVMQGPMGPMGPRGPPGPAGAPGPQGFQGNPGEPGEPGVSGPMGPRGPPGPAGKPGDDGEAGKPGKSGERGLPGPQGARGFPGTPGLPGVKGHRGYPGLDGAKGEAGAPGVKGESGSPGENGSPGPMGPRGLPGERGRTGPAGAAGARGNDGQPGPAGPPGPVGPAGGPGFPGAPGAKGEAGPTGARGPEGAQGSRGEPGNPGSPGPAGASGNPGTDGIPGAKGSAGAPGIAGAPGFPGPRGPPGPQGATGPLGPKGQAGEPGIAGFKGDQGPKGETGPAGPQGAPGPAGEEGKRGARGEPGGAGPIGPPGERGAPGNRGFPGQDGLAGPKGAPGERGPSGLTGPKGANGDPGRPGEPGLPGARGLTGRPGDAGPQGKVGPSGAPGEDGRPGPPGPQGARGQPGVMGFPGPKGANGEPGKAGEKGLAGAPGLRGLPGKDGETGAAGPPGPSGPAGERGEQGAPGPSGFQGLPGPPGPPGEGGKQGDQGIPGEAGAPGLVGPRGERGFPGERGSPGAQGLQGPRGLPGTPGTDGPKGAAGPDGPPGAQGPPGLQGMPGERGAAGIAGPKGDRGDVGEKGPEGAPGKDGGRGLTGPIGPPGPAGANGEKGEVGPPGPSGSTGARGAPGERGETGPPGPAGFAGPPGADGQPGAKGDQGEAGQKGDAGAPGPQGPSGAPGPQGPTGVTGPKGARGAQGPPGATGFPGAAGRVGPPGANGNPGPAGPPGPAGKDGPKGVRGDSGPPGRAGDPGLQGPAGAPGEKGEPGDDGPSGLDGPPGPQGLAGQRGIVGLPGQRGERGFPGLPGPSGEPGKQGAPGASGDRGPPGPVGPPGLTGPAGEPGREGSPGADGPPGRDGAAGVKGDRGETGALGAPGAPGPPGSPGPAGPTGKQGDRGEAGAQGPMGPSGPAGARGIAGPQGPRGDKGESGEQGERGLKGHRGFTGLQGLPGPPGPSGDQGASGPAGPSGPRGPPGPVGPSGKDGSNGIPGPIGPPGPRGRSGETGPVGPPGSPGPPGPPGPPGPGIDMSAFAGLGQREKGPDPMQYMRADEADSTLRQHDVEVDATLKSLNNQIESIRSPDGSRKNPARTCQDLKLCHPEWKSGDYWIDPNQGCTLDAMKVFCNMETGETCVYPNPATVPRKNWWSSKSKEKKHIWFGETMNGGFHFSYGDGNLAPNTANVQMTFLRLLSTEGSQNITYHCKNSIAYLDEAAGNLKKALLIQGSNDVEMRAEGNSRFTYTALKDGCTKHTGKWGKTVIEYRSQKTSRLPIIDIAPMDIGGAEQEFGVDIGPVCFL.

The first 25 residues, 1–25 (MIRLGAPQSLVLLTLLIAAVLRCQG), serve as a signal peptide directing secretion. Residues 26-181 (QDAQEAGSCL…PGLSAGNFAA (156 aa)) constitute a propeptide, N-terminal propeptide. The VWFC domain occupies 32–89 (GSCLQNGQRYKDKDVWKPSSCRICVCDTGNVLCDDIICEDPDCLNPEIPFGECCPICP). The disordered stretch occupies residues 96–179 (SGKLGPKGQK…GPPGLSAGNF (84 aa)). Composition is skewed to basic and acidic residues over residues 104–115 (QKGEPGDIRDII) and 132–153 (PRGD…RDGE). Residues 157 to 172 (PGNPGPAGPPGPPGPP) are compositionally biased toward pro residues. The residue at position 190 (Lys-190) is a 5-hydroxylysine. Residue Lys-190 is glycosylated (O-linked (Gal...) hydroxylysine). Residues 191–1237 (AGGAQMGVMQ…QREKGPDPMQ (1047 aa)) are disordered. Positions 192–203 (GGAQMGVMQGPM) are enriched in low complexity. The tract at residues 201–1214 (GPMGPMGPRG…PGPPGPPGPP (1014 aa)) is triple-helical region. A compositionally biased stretch (pro residues) spans 208-217 (PRGPPGPAGA). The span at 218–239 (PGPQGFQGNPGEPGEPGVSGPM) shows a compositional bias: low complexity. A compositionally biased stretch (basic and acidic residues) spans 251–265 (PGDDGEAGKPGKSGE). A 5-hydroxylysine mark is found at Lys-287, Lys-299, and Lys-308. 3 O-linked (Gal...) hydroxylysine glycosylation sites follow: Lys-287, Lys-299, and Lys-308. Low complexity-rich tracts occupy residues 310-320 (ESGSPGENGSP) and 335-350 (TGPA…DGQP). Residues 360-369 (GPAGGPGFPG) are compositionally biased toward gly residues. Low complexity-rich tracts occupy residues 370 to 382 (APGA…PTGA) and 403 to 431 (PAGA…AGAP). Residue Lys-374 is modified to 5-hydroxylysine. Lys-374 is a glycosylation site (O-linked (Gal...) hydroxylysine). Over residues 433–442 (FPGPRGPPGP) the composition is skewed to pro residues. The segment covering 472–485 (ETGPAGPQGAPGPA) has biased composition (low complexity). Lys-608 and Lys-620 each carry 5-hydroxylysine. O-linked (Gal...) hydroxylysine glycans are attached at residues Lys-608 and Lys-620. A compositionally biased stretch (low complexity) spans 622-631 (LAGAPGLRGL). A 4-hydroxyproline mark is found at Pro-659 and Pro-668. The residue at position 670 (Pro-670) is a 3-hydroxyproline. 2 positions are modified to 4-hydroxyproline: Pro-671 and Pro-674. Positions 706–736 (ERGSPGAQGLQGPRGLPGTPGTDGPKGAAGP) are enriched in low complexity. Residues 764–775 (KGDRGDVGEKGP) show a composition bias toward basic and acidic residues. Composition is skewed to low complexity over residues 833–848 (AGFA…PGAK) and 877–914 (PTGV…NGNP). 3-hydroxyproline is present on Pro-907. 4-hydroxyproline occurs at positions 908, 914, and 920. Low complexity predominate over residues 962–980 (DGPSGLDGPPGPQGLAGQR). The segment covering 1069–1079 (APGPPGSPGPA) has biased composition (pro residues). Over residues 1115–1129 (RGDKGESGEQGERGL) the composition is skewed to basic and acidic residues. Pro-1144 is subject to 3-hydroxyproline. Composition is skewed to low complexity over residues 1148 to 1157 (SGDQGASGPA) and 1171 to 1181 (PSGKDGSNGIP). Pro-1181 is subject to 4-hydroxyproline. Pro-1186 is modified (3-hydroxyproline). 4-hydroxyproline is present on Pro-1187. The span at 1199 to 1216 (VGPPGSPGPPGPPGPPGP) shows a compositional bias: pro residues. A 3-hydroxyproline modification is found at Pro-1201. 2 positions are modified to 4-hydroxyproline: Pro-1202 and Pro-1205. Residue Pro-1207 is modified to 3-hydroxyproline. Pro-1208 and Pro-1211 each carry 4-hydroxyproline. A 3-hydroxyproline modification is found at Pro-1213. At Pro-1214 the chain carries 4-hydroxyproline. The nonhelical region (C-terminal) stretch occupies residues 1215–1241 (GPGIDMSAFAGLGQREKGPDPMQYMRA). The region spanning 1253 to 1487 (VEVDATLKSL…GVDIGPVCFL (235 aa)) is the Fibrillar collagen NC1 domain. Cystine bridges form between Cys-1283–Cys-1315, Cys-1323–Cys-1485, and Cys-1393–Cys-1438. Ca(2+) is bound by residues Asp-1301, Asn-1303, Gln-1304, Cys-1306, and Asp-1309.

Belongs to the fibrillar collagen family. In terms of assembly, homotrimers of alpha 1(II) chains. Post-translationally, contains mostly 4-hydroxyproline. Prolines at the third position of the tripeptide repeating unit (G-X-P) are 4-hydroxylated in some or all of the chains. In terms of processing, contains 3-hydroxyproline at a few sites. This modification occurs on the first proline residue in the sequence motif Gly-Pro-Hyp, where Hyp is 4-hydroxyproline. Lysine residues at the third position of the tripeptide repeating unit (G-X-Y) are 5-hydroxylated in some or all of the chains. Post-translationally, O-glycosylated on hydroxylated lysine residues. The O-linked glycan consists of a Glc-Gal disaccharide.

The protein resides in the secreted. It localises to the extracellular space. It is found in the extracellular matrix. Its function is as follows. Type II collagen is specific for cartilaginous tissues. It is essential for the normal embryonic development of the skeleton, for linear growth and for the ability of cartilage to resist compressive forces. The sequence is that of Collagen alpha-1(II) chain from Mus musculus (Mouse).